The chain runs to 640 residues: RecBCD enzyme subunit RecD (640 aa).

An ATP-binding site is contributed by 194 to 201 (GGPGTGKT).

Belongs to the RecD family. Heterotrimer of RecB, RecC and RecD. All subunits contribute to DNA-binding.

It carries out the reaction Couples ATP hydrolysis with the unwinding of duplex DNA at the replication fork by translocating in the 5'-3' direction. This creates two antiparallel DNA single strands (ssDNA). The leading ssDNA polymer is the template for DNA polymerase III holoenzyme which synthesizes a continuous strand.. It catalyses the reaction ATP + H2O = ADP + phosphate + H(+). A helicase/nuclease that prepares dsDNA breaks (DSB) for recombinational DNA repair. Binds to DSBs and unwinds DNA via a highly rapid and processive ATP-dependent bidirectional helicase activity. Unwinds dsDNA until it encounters a Chi (crossover hotspot instigator) sequence from the 3' direction. Cuts ssDNA a few nucleotides 3' to the Chi site. The properties and activities of the enzyme are changed at Chi. The Chi-altered holoenzyme produces a long 3'-ssDNA overhang and facilitates RecA-binding to the ssDNA for homologous DNA recombination and repair. Holoenzyme degrades any linearized DNA that is unable to undergo homologous recombination. In the holoenzyme this subunit has ssDNA-dependent ATPase and 5'-3' helicase activity. When added to pre-assembled RecBC greatly stimulates nuclease activity and augments holoenzyme processivity. Negatively regulates the RecA-loading ability of RecBCD. The chain is RecBCD enzyme subunit RecD from Haemophilus influenzae (strain ATCC 51907 / DSM 11121 / KW20 / Rd).